Here is a 623-residue protein sequence, read N- to C-terminus: Dynein axonemal intermediate chain 2 (623 aa).

WD repeat units lie at residues 214 to 254 (KPLS…LVAE), 261 to 302 (SHRD…EPIE), 362 to 401 (GHHGPIYALQRNPFYPKNFLTVGDWTARIWSEDSRESSIM), 405 to 445 (YHMA…CDPA), and 450 to 489 (VCDDPLFCLRVQDNGCLIACGSELGTTTLLEVSSSLSTLQ). A disordered region spans residues 565–602 (AEALKKKPKPRKKSSVKVEAEEEVEENVGEEEEAGGII). Positions 570–579 (KKPKPRKKSS) are enriched in basic residues. Positions 584-598 (AEEEVEENVGEEEEA) are enriched in acidic residues.

The protein belongs to the dynein intermediate chain family. Consists of at least two heavy chains and a number of intermediate and light chains. Interacts with DNAAF2. Interacts with DNAAF6/PIH1D3. Interacts with HEATR2; probably involved in outer arm dynein assembly. Interacts with CFAP53. In terms of tissue distribution, predominantly expressed in ovary, testis and lung.

The protein resides in the cytoplasm. Its subcellular location is the cytoskeleton. It is found in the cilium axoneme. The protein localises to the dynein axonemal particle. In terms of biological role, part of the dynein complex of respiratory cilia. This chain is Dynein axonemal intermediate chain 2 (Dnai2), found in Mus musculus (Mouse).